A 330-amino-acid polypeptide reads, in one-letter code: MAFLPSWVCVLVGSFSASLAGTSNLSETEPPLWKESPGQLSDYRVENSMYIINPWVYLERMGMYKIILNQTARYFAKFAPDNEQNILWGLPLQYGWQYRTGRLADPTRRTNCGYESGDHMCISVDSWWADLNYFLSSLPFLAAVDSGVMGISSDQVRLLPPPKNERKFCYDVSSCRSSFPETMNKWNTFYQYLQSPFSKFDDLLKYLWAAHTSTLADNIKSFEDRYDYYSKAEAHFERSWVLAVDHLAAVLFPTTLIRSYKFQKGMPPRILLNTDVAPFISDFTAFQNVVLVLLNMLDNVDKSIGYLCTEKSNVYRDHSESSSRSYGNNS.

Residues 1–20 (MAFLPSWVCVLVGSFSASLA) form the signal peptide. Residues asparagine 24 and asparagine 69 are each glycosylated (N-linked (GlcNAc...) asparagine).

Belongs to the LEG1 family. As to expression, detected in saliva and in hypomineralized dental enamel (at protein level).

The protein localises to the secreted. Functionally, may be involved in early liver development. The chain is Protein LEG1 homolog from Homo sapiens (Human).